Reading from the N-terminus, the 320-residue chain is Alpha/beta hydrolase domain-containing protein 17C (320 aa).

The disordered stretch occupies residues 50–75; the sequence is RAPAPAATPAPAPAAQPAPAEEGAGP. Pro residues predominate over residues 55 to 65; it reads AATPAPAPAAQ. Residues Ser-202, Asp-267, and His-296 each act as charge relay system in the active site.

This sequence belongs to the AB hydrolase superfamily. ABHD17 family. Palmitoylated on cysteine residues located in a cysteine cluster at the N-terminus which promotes membrane localization. Palmitoylation is required for post-synaptic localization and for depalmitoylating activity towards DLG4/PSD95.

The protein localises to the recycling endosome membrane. It is found in the cell projection. It localises to the dendritic spine. The protein resides in the postsynaptic density membrane. It carries out the reaction S-hexadecanoyl-L-cysteinyl-[protein] + H2O = L-cysteinyl-[protein] + hexadecanoate + H(+). Functionally, hydrolyzes fatty acids from S-acylated cysteine residues in proteins. Has depalmitoylating activity towards DLG4/PSD95. This Mus musculus (Mouse) protein is Alpha/beta hydrolase domain-containing protein 17C.